We begin with the raw amino-acid sequence, 90 residues long: NELL2-interacting cell ontogeny regulator 1 (90 aa).

Residues 1–26 form the signal peptide; it reads MVSSGYLQAVMLLLAVQLLCFRPSDA.

It belongs to the NICOL family.

Its subcellular location is the secreted. Functionally, mRNA-binding protein which interacts with a range of target mRNAs and may promote extracellular matrix production. This is NELL2-interacting cell ontogeny regulator 1 from Salmo salar (Atlantic salmon).